The chain runs to 1252 residues: DNA-directed RNA polymerase subunit beta (1252 aa).

This sequence belongs to the RNA polymerase beta chain family. The RNAP catalytic core consists of 2 alpha, 1 beta, 1 beta' and 1 omega subunit. When a sigma factor is associated with the core the holoenzyme is formed, which can initiate transcription.

It catalyses the reaction RNA(n) + a ribonucleoside 5'-triphosphate = RNA(n+1) + diphosphate. Its function is as follows. DNA-dependent RNA polymerase catalyzes the transcription of DNA into RNA using the four ribonucleoside triphosphates as substrates. The chain is DNA-directed RNA polymerase subunit beta from Chlamydia trachomatis serovar L2 (strain ATCC VR-902B / DSM 19102 / 434/Bu).